Reading from the N-terminus, the 782-residue chain is General transcription and DNA repair factor IIH helicase/translocase subunit XPB (782 aa).

The segment covering 1–11 (MGKRDRADREK) has biased composition (basic and acidic residues). Residues 1 to 51 (MGKRDRADREKKKSKKRHYEDEEDEEDDAPGNDTQEAVPSAAGKQVDESGT) form a disordered region. The Nuclear localization signal signature appears at 6 to 18 (RADREKKKSKKRH). Acidic residues predominate over residues 21-30 (DEEDEEDDAP). Residues 327–488 (MFGNGRARSG…DLNFLIGPKL (162 aa)) enclose the Helicase ATP-binding domain. Residue 340–347 (LPCGAGKS) participates in ATP binding. A DEVH box motif is present at residues 441–444 (DEVH). A Helicase C-terminal domain is found at 542–702 (RACQFLIKFH…LAGMEEEDLA (161 aa)). Residue Ser-686 is modified to Phosphoserine. Ser-751 carries the post-translational modification Phosphoserine; by CK2.

Belongs to the helicase family. RAD25/XPB subfamily. In terms of assembly, component of the 7-subunit TFIIH core complex composed of XPB/ERCC3, XPD/ERCC2, GTF2H1, GTF2H2, GTF2H3, GTF2H4 and GTF2H5, which is active in NER. The core complex associates with the 3-subunit CDK-activating kinase (CAK) module composed of CCNH/cyclin H, CDK7 and MNAT1 to form the 10-subunit holoenzyme (holo-TFIIH) active in transcription. Interacts with PUF60. Interacts with ATF7IP. Interacts with KAT2A; leading to KAT2A recruitment to promoters and acetylation of histones. Part of TBP-based Pol II pre-initiation complex (PIC), in which Pol II core assembles with general transcription factors and other specific initiation factors including GTF2E1, GTF2E2, GTF2F1, GTF2F2, TCEA1, ERCC2, ERCC3, GTF2H2, GTF2H3, GTF2H4, GTF2H5, GTF2A1, GTF2A2, GTF2B and TBP; this large multi-subunit PIC complex mediates DNA unwinding and targets Pol II core to the transcription start site where the first phosphodiester bond forms. In terms of processing, phosphorylation on Ser-751 by CK2 controls the 5'-excision activity of ERCC1-XPF endonuclease; phosphorylated protein inhibits the excision activity and thus NER. Dephosphorylation reactivates the 5'-excision step. Phosphorylation has no effect on transcription or the 3'-5' helicase activity.

It is found in the nucleus. It carries out the reaction Couples ATP hydrolysis with the unwinding of duplex DNA by translocating in the 3'-5' direction.. The catalysed reaction is ATP + H2O = ADP + phosphate + H(+). With respect to regulation, phosphorylation on Ser-751 by CK2 controls the 5'-excision activity of ERCC1-XPF endonuclease; phosphorylated protein inhibits the excision activity and thus NER. ATPase activity is stimulated by TFIIH subunit p52 (GTF2H4). DNA translocase activity by this subunit in TFIIH is stimulated by XPA, ERCC5/XPG and XFP plus ERCC1. In terms of biological role, ATP-dependent 3'-5' DNA helicase/translocase; binds dsDNA rather than ssDNA, unzipping it in a translocase rather than classical helicase activity. Component of the general transcription and DNA repair factor IIH (TFIIH) core complex. When complexed to CDK-activating kinase (CAK), involved in RNA transcription by RNA polymerase II. The ATPase activity of XPB/ERCC3, but not its helicase activity, is required for DNA opening; it may wrap around the damaged DNA wedging it open, causing localized melting and twisting that allows XPD/ERCC2 helicase to anchor. The ATP-dependent helicase activity of XPB/ERCC3 may be required for promoter escape. Also involved in transcription-coupled nucleotide excision repair (NER) of damaged DNA. In NER, TFIIH acts by opening DNA around the lesion to allow the excision of the damaged oligonucleotide and its replacement by a new DNA fragment. The structure of the TFIIH transcription complex differs from the NER-TFIIH complex; large movements by XPD/ERCC2 and XPB/ERCC3 are stabilized by XPA. In Bos taurus (Bovine), this protein is General transcription and DNA repair factor IIH helicase/translocase subunit XPB (ERCC3).